Here is a 160-residue protein sequence, read N- to C-terminus: Sec-independent protein translocase protein TatB (160 aa).

A helical transmembrane segment spans residues 1-21; that stretch reads MFGMGFFEILVVLIVAIIFLG. The disordered stretch occupies residues 118 to 160; the sequence is HLNEEVSNEEALNKEVSSDESPKEVQLTTDNNAKEHDKEKEHV. Basic and acidic residues-rich tracts occupy residues 128–140 and 149–160; these read ALNK…ESPK and NAKEHDKEKEHV.

The protein belongs to the TatB family. As to quaternary structure, the Tat system comprises two distinct complexes: a TatABC complex, containing multiple copies of TatA, TatB and TatC subunits, and a separate TatA complex, containing only TatA subunits. Substrates initially bind to the TatABC complex, which probably triggers association of the separate TatA complex to form the active translocon.

It is found in the cell inner membrane. Part of the twin-arginine translocation (Tat) system that transports large folded proteins containing a characteristic twin-arginine motif in their signal peptide across membranes. Together with TatC, TatB is part of a receptor directly interacting with Tat signal peptides. TatB may form an oligomeric binding site that transiently accommodates folded Tat precursor proteins before their translocation. The sequence is that of Sec-independent protein translocase protein TatB from Helicobacter pylori (strain J99 / ATCC 700824) (Campylobacter pylori J99).